We begin with the raw amino-acid sequence, 342 residues long: Ribosomal RNA small subunit methyltransferase C (342 aa).

Belongs to the methyltransferase superfamily. RsmC family. Monomer.

It is found in the cytoplasm. The catalysed reaction is guanosine(1207) in 16S rRNA + S-adenosyl-L-methionine = N(2)-methylguanosine(1207) in 16S rRNA + S-adenosyl-L-homocysteine + H(+). Functionally, specifically methylates the guanine in position 1207 of 16S rRNA in the 30S particle. The polypeptide is Ribosomal RNA small subunit methyltransferase C (Salmonella enteritidis PT4 (strain P125109)).